Consider the following 428-residue polypeptide: Glutamate-1-semialdehyde 2,1-aminomutase (428 aa).

Lys-267 is modified (N6-(pyridoxal phosphate)lysine).

This sequence belongs to the class-III pyridoxal-phosphate-dependent aminotransferase family. HemL subfamily. As to quaternary structure, homodimer. Requires pyridoxal 5'-phosphate as cofactor.

The protein localises to the cytoplasm. It carries out the reaction (S)-4-amino-5-oxopentanoate = 5-aminolevulinate. The protein operates within porphyrin-containing compound metabolism; protoporphyrin-IX biosynthesis; 5-aminolevulinate from L-glutamyl-tRNA(Glu): step 2/2. It functions in the pathway porphyrin-containing compound metabolism; chlorophyll biosynthesis. The chain is Glutamate-1-semialdehyde 2,1-aminomutase from Prochlorococcus marinus (strain MIT 9303).